A 97-amino-acid chain; its full sequence is Apolipoprotein C-II (97 aa).

Residues 1-22 form the signal peptide; it reads MGSRFFLALFLVLLVLGNEVQG. The interval 63 to 71 is lipid binding; the sequence is SVDEKLRDM. The interval 75–97 is lipoprotein lipase cofactor; the sequence is SSAAMSTYAGIFTDQLLTLLKGE.

The protein belongs to the apolipoprotein C2 family. Proapolipoprotein C-II is synthesized as a sialic acid containing glycoprotein which is subsequently desialylated prior to its proteolytic processing. Post-translationally, proapolipoprotein C-II, the major form found in plasma undergoes proteolytic cleavage of its N-terminal hexapeptide to generate the mature form apolipoprotein C-II, which occurs as the minor form in plasma.

Its subcellular location is the secreted. Component of chylomicrons, very low-density lipoproteins (VLDL), low-density lipoproteins (LDL), and high-density lipoproteins (HDL) in plasma. Plays an important role in lipoprotein metabolism as an activator of lipoprotein lipase. This Grammomys surdaster (African woodland thicket rat) protein is Apolipoprotein C-II (Apoc2).